Reading from the N-terminus, the 338-residue chain is Tagatose 1,6-diphosphate aldolase (338 aa).

This sequence belongs to the aldolase LacD family.

The catalysed reaction is D-tagatofuranose 1,6-bisphosphate = D-glyceraldehyde 3-phosphate + dihydroxyacetone phosphate. It functions in the pathway carbohydrate metabolism; D-tagatose 6-phosphate degradation; D-glyceraldehyde 3-phosphate and glycerone phosphate from D-tagatose 6-phosphate: step 2/2. This Listeria monocytogenes serotype 4a (strain HCC23) protein is Tagatose 1,6-diphosphate aldolase.